Consider the following 128-residue polypeptide: MLWKSVLSVALIVLGIHDCSFKFLEIDKNEEEFAISVEHVVFHFNENQDDDFAYKFLRVRRSLRQKYTLKYLVDLEMGRTLCGKYDEDIDNCPLQEGPGERKVRCTYIVETEAWVTKFTILNSTCVQT.

An N-terminal signal peptide occupies residues 1–21; it reads MLWKSVLSVALIVLGIHDCSF. Disulfide bonds link Cys82–Cys92 and Cys105–Cys125. Asn122 carries N-linked (GlcNAc...) asparagine glycosylation.

It belongs to the cystatin family. As to expression, located at the very proximal caput epididymis (at protein level). Expressed in epididymis, Sertoli cells and testis. Also found to be weakly expressed in ovary and prostate.

It localises to the secreted. Its function is as follows. May play a specialized role in spermatogenesis. The polypeptide is Cystatin-12 (Cst12) (Mus musculus (Mouse)).